Reading from the N-terminus, the 49-residue chain is Large ribosomal subunit protein bL33 (49 aa).

It belongs to the bacterial ribosomal protein bL33 family.

This chain is Large ribosomal subunit protein bL33, found in Clostridium botulinum (strain Alaska E43 / Type E3).